The sequence spans 425 residues: Serine--tRNA ligase (425 aa).

228–230 provides a ligand contact to L-serine; it reads TAE. 259–261 provides a ligand contact to ATP; it reads RSE. Glutamate 282 is a binding site for L-serine. 346 to 349 contributes to the ATP binding site; the sequence is EIAS. Serine 382 is a binding site for L-serine.

This sequence belongs to the class-II aminoacyl-tRNA synthetase family. Type-1 seryl-tRNA synthetase subfamily. In terms of assembly, homodimer. The tRNA molecule binds across the dimer.

The protein resides in the cytoplasm. The catalysed reaction is tRNA(Ser) + L-serine + ATP = L-seryl-tRNA(Ser) + AMP + diphosphate + H(+). The enzyme catalyses tRNA(Sec) + L-serine + ATP = L-seryl-tRNA(Sec) + AMP + diphosphate + H(+). It participates in aminoacyl-tRNA biosynthesis; selenocysteinyl-tRNA(Sec) biosynthesis; L-seryl-tRNA(Sec) from L-serine and tRNA(Sec): step 1/1. Functionally, catalyzes the attachment of serine to tRNA(Ser). Is also able to aminoacylate tRNA(Sec) with serine, to form the misacylated tRNA L-seryl-tRNA(Sec), which will be further converted into selenocysteinyl-tRNA(Sec). In Rickettsia africae (strain ESF-5), this protein is Serine--tRNA ligase.